The chain runs to 164 residues: uncharacterized protein (164 aa).

The N-terminal stretch at Met1–Ala25 is a signal peptide.

This is an uncharacterized protein from Escherichia coli (strain K12).